Here is a 754-residue protein sequence, read N- to C-terminus: Protein neuralized (754 aa).

One can recognise an NHR 1 domain in the interval 106–260 (PLQFHSVHGD…NCTGIEFLDS (155 aa)). The segment covering 280–297 (QQQQMPQPAANASSALNS) has biased composition (low complexity). The interval 280-308 (QQQQMPQPAANASSALNSHHPHQQSRRSL) is disordered. A phosphoserine mark is found at Ser-338 and Ser-341. The NHR 2 domain occupies 368–523 (PVPFHNTKGR…STQSLRMFRQ (156 aa)). The RING-type zinc finger occupies 701–742 (CTICYENPIDSVLYMCGHMCMCYDCAIEQWRGVGGGQCPLCR).

Its subcellular location is the nucleus. In terms of biological role, involved in neurogenesis. Interacts with other neurogenic proteins in the specification of the neuroblast versus epidermoblast cell fate. This is Protein neuralized (neur) from Drosophila melanogaster (Fruit fly).